The sequence spans 211 residues: Arginine exporter protein ArgO (211 aa).

The next 6 helical transmembrane spans lie at 1 to 21 (MISY…PLGP), 37 to 57 (LMIA…GIFG), 68 to 88 (LLAL…FGAL), 111 to 131 (IIAT…DTFV), 147 to 167 (WFAL…ALLA), and 179 to 199 (AQRI…FQLA).

This sequence belongs to the LysE/ArgO transporter (TC 2.A.75) family.

The protein resides in the cell inner membrane. It catalyses the reaction L-arginine(in) = L-arginine(out). Its function is as follows. Involved in the export of arginine. Important to control the intracellular level of arginine and the correct balance between arginine and lysine. This is Arginine exporter protein ArgO from Salmonella newport (strain SL254).